A 340-amino-acid chain; its full sequence is Ketol-acid reductoisomerase (NADP(+)) (340 aa).

Residues 3–182 (VTMYYEDDVE…GCARVGIIET (180 aa)) form the KARI N-terminal Rossmann domain. NADP(+) contacts are provided by residues 26 to 29 (YGSQ), Arg-49, Ser-53, and 83 to 86 (DELQ). The active site involves His-108. Residue Gly-134 coordinates NADP(+). The KARI C-terminal knotted domain occupies 183–328 (TFKEETEEDL…AELRKAMPFT (146 aa)). Residues Asp-191, Glu-195, Glu-227, and Glu-231 each coordinate Mg(2+). Ser-252 contacts substrate.

Belongs to the ketol-acid reductoisomerase family. The cofactor is Mg(2+).

The catalysed reaction is (2R)-2,3-dihydroxy-3-methylbutanoate + NADP(+) = (2S)-2-acetolactate + NADPH + H(+). The enzyme catalyses (2R,3R)-2,3-dihydroxy-3-methylpentanoate + NADP(+) = (S)-2-ethyl-2-hydroxy-3-oxobutanoate + NADPH + H(+). It participates in amino-acid biosynthesis; L-isoleucine biosynthesis; L-isoleucine from 2-oxobutanoate: step 2/4. The protein operates within amino-acid biosynthesis; L-valine biosynthesis; L-valine from pyruvate: step 2/4. Involved in the biosynthesis of branched-chain amino acids (BCAA). Catalyzes an alkyl-migration followed by a ketol-acid reduction of (S)-2-acetolactate (S2AL) to yield (R)-2,3-dihydroxy-isovalerate. In the isomerase reaction, S2AL is rearranged via a Mg-dependent methyl migration to produce 3-hydroxy-3-methyl-2-ketobutyrate (HMKB). In the reductase reaction, this 2-ketoacid undergoes a metal-dependent reduction by NADPH to yield (R)-2,3-dihydroxy-isovalerate. The sequence is that of Ketol-acid reductoisomerase (NADP(+)) from Lactococcus lactis subsp. lactis (strain IL1403) (Streptococcus lactis).